A 224-amino-acid chain; its full sequence is MSQTKALKVRVTLFCILVGIVLALVAVVTDHWAVLSPHVEHLNATCEAAHFGLWRICTKRIAVGDSKDKSCGPITLPGEKNCSYFRHFNPGETSEIFHVTTQKEYSISAAAIAIFSLGFIILGTICGLLSFRKKRDYLLRPASMFYAFAGLCIFVSVEVMRQSVKRMIDSEDTVWIDYYYGWSFACACAAFILLFLGGIALLLFSLPRMPQYPWESCMDAEPEH.

At 1-10 the chain is on the cytoplasmic side; it reads MSQTKALKVR. A helical membrane pass occupies residues 11–29; it reads VTLFCILVGIVLALVAVVT. At 30–110 the chain is on the extracellular side; sequence DHWAVLSPHV…TQKEYSISAA (81 aa). 2 N-linked (GlcNAc...) asparagine glycosylation sites follow: Asn43 and Asn81. Cysteines 57 and 82 form a disulfide. Residues 111 to 131 form a helical membrane-spanning segment; it reads AIAIFSLGFIILGTICGLLSF. Residues 132 to 136 are Cytoplasmic-facing; the sequence is RKKRD. Residues 137-157 form a helical membrane-spanning segment; it reads YLLRPASMFYAFAGLCIFVSV. The Extracellular portion of the chain corresponds to 158 to 181; sequence EVMRQSVKRMIDSEDTVWIDYYYG. A helical membrane pass occupies residues 182 to 206; the sequence is WSFACACAAFILLFLGGIALLLFSL. The Cytoplasmic portion of the chain corresponds to 207–224; that stretch reads PRMPQYPWESCMDAEPEH.

This sequence belongs to the PMP-22/EMP/MP20 family. CACNG subfamily. Component of a calcium channel complex consisting of a pore-forming alpha subunit (CACNA1S) and the ancillary subunits CACNB1 or CACNB2, CACNG1 and CACNA2D1. The channel complex contains alpha, beta, gamma and delta subunits in a 1:1:1:1 ratio, i.e. it contains either CACNB1 or CACNB2. In terms of processing, N-glycosylated.

Its subcellular location is the cell membrane. It is found in the sarcolemma. Functionally, regulatory subunit of the voltage-gated calcium channel that gives rise to L-type calcium currents in skeletal muscle. Regulates channel inactivation kinetics. This chain is Voltage-dependent calcium channel gamma-1 subunit (CACNG1), found in Sus scrofa (Pig).